A 115-amino-acid polypeptide reads, in one-letter code: Yop proteins translocation protein M (115 aa).

A disordered region spans residues 19–38 (HGGQAGRLTETNPLTENSHQ). The span at 27–38 (TETNPLTENSHQ) shows a compositional bias: polar residues.

In terms of biological role, belongs to an operon involved in the translocation of Yop proteins across the bacterial membranes or in the specific control of this function. This is Yop proteins translocation protein M (yscM) from Yersinia pestis.